Reading from the N-terminus, the 303-residue chain is 3-methyl-2-oxobutanoate hydroxymethyltransferase (303 aa).

Residues 1 to 10 (MDSSGTVRNQ) show a composition bias toward polar residues. A disordered region spans residues 1–41 (MDSSGTVRNQTSDDHSRPADAAGTAATLYGAPAETRSPRRS). Residues D84 and D123 each contribute to the Mg(2+) site. Residues 84–85 (DS), D123, and K153 each bind 3-methyl-2-oxobutanoate. E155 is a binding site for Mg(2+). The Proton acceptor role is filled by E221.

This sequence belongs to the PanB family. As to quaternary structure, homodecamer; pentamer of dimers. The cofactor is Mg(2+).

The protein resides in the cytoplasm. The enzyme catalyses 3-methyl-2-oxobutanoate + (6R)-5,10-methylene-5,6,7,8-tetrahydrofolate + H2O = 2-dehydropantoate + (6S)-5,6,7,8-tetrahydrofolate. The protein operates within cofactor biosynthesis; (R)-pantothenate biosynthesis; (R)-pantoate from 3-methyl-2-oxobutanoate: step 1/2. Functionally, catalyzes the reversible reaction in which hydroxymethyl group from 5,10-methylenetetrahydrofolate is transferred onto alpha-ketoisovalerate to form ketopantoate. The polypeptide is 3-methyl-2-oxobutanoate hydroxymethyltransferase (Frankia alni (strain DSM 45986 / CECT 9034 / ACN14a)).